Reading from the N-terminus, the 368-residue chain is Flagellar P-ring protein (368 aa).

An N-terminal signal peptide occupies residues 1–22 (MLIPLARAVLALELLGAGAAHA).

This sequence belongs to the FlgI family. In terms of assembly, the basal body constitutes a major portion of the flagellar organelle and consists of four rings (L,P,S, and M) mounted on a central rod.

It is found in the periplasm. The protein resides in the bacterial flagellum basal body. Functionally, assembles around the rod to form the L-ring and probably protects the motor/basal body from shearing forces during rotation. In Bordetella pertussis (strain Tohama I / ATCC BAA-589 / NCTC 13251), this protein is Flagellar P-ring protein.